The sequence spans 232 residues: MIKNFLLSLSFISRLPLNINVNDFDRRVKKLPSFFPLVGYIVGSIYYLGALSNNLALKVFFLVLAFYFFDLFHFDGFLDTLDGFLNQSTKEKRLEIMSKGDVGPFAVFFGTLFVVVFWNLYLNANPFYFFISSTFGRYSMVLLMAFSKPAKKEGLGALFFPFEKKNLLISTIFTFFLIIFFKQYIISLTVTLITTYLISKIATSKIGGVTGDVLGGTCLFVNGLILLILEVV.

6 helical membrane passes run 31–51, 59–79, 102–122, 126–146, 167–187, and 209–229; these read LPSF…LGAL, VFFL…GFLD, VGPF…NLYL, PFYF…LMAF, LLIS…YIIS, and VTGD…LLIL.

The protein belongs to the CobS family. Mg(2+) serves as cofactor.

It is found in the cell inner membrane. It catalyses the reaction alpha-ribazole + adenosylcob(III)inamide-GDP = adenosylcob(III)alamin + GMP + H(+). The catalysed reaction is alpha-ribazole 5'-phosphate + adenosylcob(III)inamide-GDP = adenosylcob(III)alamin 5'-phosphate + GMP + H(+). It participates in cofactor biosynthesis; adenosylcobalamin biosynthesis; adenosylcobalamin from cob(II)yrinate a,c-diamide: step 7/7. In terms of biological role, joins adenosylcobinamide-GDP and alpha-ribazole to generate adenosylcobalamin (Ado-cobalamin). Also synthesizes adenosylcobalamin 5'-phosphate from adenosylcobinamide-GDP and alpha-ribazole 5'-phosphate. The polypeptide is Adenosylcobinamide-GDP ribazoletransferase (Thermosipho africanus (strain TCF52B)).